An 845-amino-acid chain; its full sequence is Protein P (845 aa).

The interval Met-1 to Gln-179 is terminal protein domain (TP). The interval Glu-180–Arg-348 is spacer. The tract at residues Gly-226–Ile-245 is disordered. The polymerase/reverse transcriptase domain (RT) stretch occupies residues Glu-349–Gln-692. One can recognise a Reverse transcriptase domain in the interval Glu-359–Ile-602. Residues Asp-431, Asp-553, and Asp-554 each contribute to the Mg(2+) site.

It belongs to the hepadnaviridae P protein family.

It carries out the reaction DNA(n) + a 2'-deoxyribonucleoside 5'-triphosphate = DNA(n+1) + diphosphate. The enzyme catalyses Endonucleolytic cleavage to 5'-phosphomonoester.. Activated by host HSP70 and HSP40 in vitro to be able to bind the epsilon loop of the pgRNA. Because deletion of the RNase H region renders the protein partly chaperone-independent, the chaperones may be needed indirectly to relieve occlusion of the RNA-binding site by this domain. Inhibited by several reverse-transcriptase inhibitors: Lamivudine, Adefovir and Entecavir. Functionally, multifunctional enzyme that converts the viral RNA genome into dsDNA in viral cytoplasmic capsids. This enzyme displays a DNA polymerase activity that can copy either DNA or RNA templates, and a ribonuclease H (RNase H) activity that cleaves the RNA strand of RNA-DNA heteroduplexes in a partially processive 3'- to 5'-endonucleasic mode. Neo-synthesized pregenomic RNA (pgRNA) are encapsidated together with the P protein, and reverse-transcribed inside the nucleocapsid. Initiation of reverse-transcription occurs first by binding the epsilon loop on the pgRNA genome, and is initiated by protein priming, thereby the 5'-end of (-)DNA is covalently linked to P protein. Partial (+)DNA is synthesized from the (-)DNA template and generates the relaxed circular DNA (RC-DNA) genome. After budding and infection, the RC-DNA migrates in the nucleus, and is converted into a plasmid-like covalently closed circular DNA (cccDNA). The activity of P protein does not seem to be necessary for cccDNA generation, and is presumably released from (+)DNA by host nuclear DNA repair machinery. The protein is Protein P of Homo sapiens (Human).